Reading from the N-terminus, the 1195-residue chain is Zinc finger and BTB domain-containing protein 38 (1195 aa).

The BTB domain maps to 33 to 100; sequence CDVTIIVEDT…IYSSTVVVKR (68 aa). Residue Lys-43 forms a Glycyl lysine isopeptide (Lys-Gly) (interchain with G-Cter in SUMO2) linkage. Ser-130 carries the post-translational modification Phosphoserine. Residues Lys-145, Lys-148, Lys-151, and Lys-259 each participate in a glycyl lysine isopeptide (Lys-Gly) (interchain with G-Cter in SUMO2) cross-link. A disordered region spans residues 264 to 334; that stretch reads RKPKTFSIPQ…QSSDVPGPPA (71 aa). The segment covering 270–280 has biased composition (polar residues); the sequence is SIPQDSDSATE. The interaction with CBFA2T3 stretch occupies residues 300–523; the sequence is PAAVLTRSKS…RRYQCIFCLE (224 aa). Ser-309 is modified (phosphoserine). Residues 314-323 show a composition bias toward basic and acidic residues; the sequence is GDVHFSREDE. The C2H2-type 1 zinc-finger motif lies at 342–364; sequence YNCSCCSKAFDSSTLLSAHMQLH. The segment at 371–395 adopts a C2H2-type 2; degenerate zinc-finger fold; that stretch reads LVCKYCNKQFTTLNRLDRHEQICMR. 3 C2H2-type zinc fingers span residues 460-482, 488-510, and 516-539; these read YSCV…ANVH, YPCH…EIWH, and YQCI…KSFH. Glycyl lysine isopeptide (Lys-Gly) (interchain with G-Cter in SUMO2) cross-links involve residues Lys-550, Lys-557, Lys-754, Lys-758, Lys-763, Lys-804, Lys-814, Lys-821, Lys-842, Lys-850, and Lys-857. The segment at 745–804 is disordered; it reads SDPAVSQSLKDDSKPEPDKVGRFASRPKSIKEKKKTTSHTRGEIPEESNYVADPGGSLSK. Basic and acidic residues predominate over residues 753–765; sequence LKDDSKPEPDKVG. Disordered stretches follow at residues 871-891 and 903-922; these read QEEP…PLGL and FDDA…YYNY. Residues Lys-923, Lys-964, Lys-969, Lys-977, Lys-981, Lys-991, Lys-1017, and Lys-1026 each participate in a glycyl lysine isopeptide (Lys-Gly) (interchain with G-Cter in SUMO2) cross-link. 5 consecutive C2H2-type zinc fingers follow at residues 1010–1032, 1038–1060, 1066–1088, 1094–1116, and 1125–1147; these read YACE…MRCH, YQCK…ERIH, FVCQ…ERIH, YHCQ…EQRH, and YACF…QKKH. Glycyl lysine isopeptide (Lys-Gly) (interchain with G-Cter in SUMO2) cross-links involve residues Lys-1109, Lys-1132, Lys-1135, Lys-1150, and Lys-1183.

Interacts with CBFA2T3. Interacts with ZBTB4. Interacts with RBBP6. Ubiquitinated by RBBP6; leading to its degradation by the proteasome.

Its subcellular location is the nucleus. The protein resides in the chromosome. Functionally, transcriptional regulator with bimodal DNA-binding specificity. Binds with a higher affinity to methylated CpG dinucleotides in the consensus sequence 5'-CGCG-3' but can also bind to E-box elements (5'-CACGTG-3'). Can also bind specifically to a single methyl-CpG pair. Represses transcription in a methyl-CpG-dependent manner. Plays an important role in regulating DNA replication and common fragile sites (CFS) stability in a RBBP6- and MCM10-dependent manner; represses expression of MCM10 which plays an important role in DNA-replication. Acts as a transcriptional activator. May be involved in the differentiation and/or survival of late postmitotic neurons. In Homo sapiens (Human), this protein is Zinc finger and BTB domain-containing protein 38.